The primary structure comprises 177 residues: MSRVAKNPVTVPAGVEVKFGAEALVIKGKNGELSFPLHSDVAIEFNDGKLTFVANNSSKQANAMSGTARALVSNMVKGVSEGFEKRLQLIGVGYRAQAQGKILNLSLGFSHPIVYEMPEGVSVQTPSQTEIVLTGSDKQVVGQVAAEIRAFRAPEPYKGKGVRYVGEVVVMKEAKKK.

Belongs to the universal ribosomal protein uL6 family. Part of the 50S ribosomal subunit.

Its function is as follows. This protein binds to the 23S rRNA, and is important in its secondary structure. It is located near the subunit interface in the base of the L7/L12 stalk, and near the tRNA binding site of the peptidyltransferase center. The sequence is that of Large ribosomal subunit protein uL6 from Neisseria meningitidis serogroup B (strain ATCC BAA-335 / MC58).